The sequence spans 168 residues: Thermonuclease (168 aa).

The signal sequence occupies residues 1-27; sequence MKKITTGVLILAIAIVVLIFQYINGDG. Catalysis depends on residues R64, E72, and R114.

This sequence belongs to the thermonuclease family. It depends on Ca(2+) as a cofactor.

The protein resides in the secreted. The catalysed reaction is Endonucleolytic cleavage to nucleoside 3'-phosphates and 3'-phosphooligonucleotide end-products.. Enzyme that catalyzes the hydrolysis of both DNA and RNA at the 5'-position of the phosphodiester bond. The sequence is that of Thermonuclease (nucI) from Staphylococcus intermedius.